Here is a 359-residue protein sequence, read N- to C-terminus: 3-dehydroquinate synthase (359 aa).

NAD(+) contacts are provided by residues 71 to 76 (DGEAHK), 105 to 109 (GVIGD), 129 to 130 (TT), Lys142, Lys151, and 169 to 172 (TLHT). Positions 184, 247, and 264 each coordinate Zn(2+).

The protein belongs to the sugar phosphate cyclases superfamily. Dehydroquinate synthase family. The cofactor is Co(2+). Zn(2+) serves as cofactor. NAD(+) is required as a cofactor.

It localises to the cytoplasm. It catalyses the reaction 7-phospho-2-dehydro-3-deoxy-D-arabino-heptonate = 3-dehydroquinate + phosphate. The protein operates within metabolic intermediate biosynthesis; chorismate biosynthesis; chorismate from D-erythrose 4-phosphate and phosphoenolpyruvate: step 2/7. Catalyzes the conversion of 3-deoxy-D-arabino-heptulosonate 7-phosphate (DAHP) to dehydroquinate (DHQ). The protein is 3-dehydroquinate synthase of Neisseria gonorrhoeae (strain ATCC 700825 / FA 1090).